Here is a 327-residue protein sequence, read N- to C-terminus: MAPGDKKQIIFVITTIGRPSSTVVPFKNLEVSEWSYKKGIKNGYDDYRDPPSPKPLPKSKQEPNADDKVGDIEYDEMVSVRDGYYSDVCRLTCTEDTKIFIADHISLWRYIMDNAEKLPNYVVIMEDDNTITGEGFITNLDNITKVLNDNNVDILQLVTHTKLLKDRNSQHLMLLPDLEAFKGSFDVSLSAYIIRQEAVRKLYSYFTNNKPSFDISLEILRIENTLGITRYVVDNDRYVYHDYKLANEFMKNKKNRLSIKSRIDGWIMDNWPSFYHRMYYPLFSVFGKYDITMMFLIAIVIIIGLAIFDINNKLLWLLSGVFLAYSM.

The tract at residues 41–69 (KNGYDDYRDPPSPKPLPKSKQEPNADDKV) is disordered. The span at 59-69 (SKQEPNADDKV) shows a compositional bias: basic and acidic residues. The chain crosses the membrane as a helical span at residues 291-311 (ITMMFLIAIVIIIGLAIFDIN).

This sequence belongs to the poxviruses protein p35 family.

The protein resides in the virion membrane. In terms of biological role, envelope protein that binds to the cell surface to provide virion attachment to target cell. In Fowlpox virus (strain NVSL) (FPV), this protein is Immunodominant envelope protein p35.